Reading from the N-terminus, the 526-residue chain is Thymocyte selection-associated high mobility group box protein TOX (526 aa).

The segment covering 194–203 (NMGGTNVAHN) has biased composition (polar residues). The disordered stretch occupies residues 194 to 264 (NMGGTNVAHN…KKDPNEPQKP (71 aa)). Positions 209–220 (GSKSATPSPSSS) are enriched in low complexity. Basic and acidic residues predominate over residues 228 to 245 (DASKINGGEKRPASDMGK). A Nuclear localization signal motif is present at residues 237–256 (KRPASDMGKKPKTPKKKKKK). Positions 246 to 256 (KPKTPKKKKKK) are enriched in basic residues. Residues 261–329 (PQKPVSAYAL…EYLKQLAAYR (69 aa)) constitute a DNA-binding region (HMG box).

This sequence belongs to the high motility group (HMG) box superfamily. Interacts with HBO1 complex composed at least of KAT7/HBO1, ING4, MEAF6, and JADE2; this complex is involved in histone acetylation. Interacts with DNMT1, LEO1, PAF1, SAP130 and SIN3A; these interactors regulate chromatin remodeling. Interacts with an array of proteins involved in RNA processing and translation and DNA replication. Expressed in neurons of the subventricular zone (at protein level). Expressed in distinct subpopulations of thymocytes undergoing positive selection: double CD4-positive CD8-positive (DP) cells, CD4-positive CD8-low transitional cells and in single CD4-positive and CD8-positive cells (at protein level). Expressed in ILC progenitors and mature ILC subsets: ILC1, ILC2 and ILC3 (at protein level). Expressed in lymphoid tissue-inducer cells and bone marrow NK cell subsets. Abundant in thymus, liver and brain. Also detected in small intestine, spleen, stomach and testis. Highly expressed in tumor-infiltrating CD8-positive T cells (at protein level).

Its subcellular location is the nucleus. In terms of biological role, transcriptional regulator with a major role in neural stem cell commitment and corticogenesis as well as in lymphoid cell development and lymphoid tissue organogenesis. Binds to GC-rich DNA sequences in the proximity of transcription start sites and may alter chromatin structure, modifying access of transcription factors to DNA. During cortical development, controls the neural stem cell pool by inhibiting the switch from proliferative to differentiating progenitors. Beyond progenitor cells, promotes neurite outgrowth in newborn neurons migrating to reach the cortical plate. May activate or repress critical genes for neural stem cell fate such as SOX2, EOMES and ROBO2. Plays an essential role in the development of lymphoid tissue-inducer (LTi) cells, a subset necessary for the formation of secondary lymphoid organs: peripheral lymph nodes and Peyer's patches. Acts as a developmental checkpoint and regulates thymocyte positive selection toward T cell lineage commitment. Required for the development of various T cell subsets, including CD4-positive helper T cells, CD8-positive cytotoxic T cells, regulatory T cells and CD1D-dependent natural killer T (NKT) cells. Required for the differentiation of common lymphoid progenitors (CMP) to innate lymphoid cells (ILC). May regulate the NOTCH-mediated gene program, promoting differentiation of the ILC lineage. Required at the progenitor phase of NK cell development in the bone marrow to specify NK cell lineage commitment. Upon chronic antigen stimulation, diverts T cell development by promoting the generation of exhaustive T cells, while suppressing effector and memory T cell programming. May regulate the expression of genes encoding inhibitory receptors such as PDCD1 and induce the exhaustion program, to prevent the overstimulation of T cells and activation-induced cell death. The chain is Thymocyte selection-associated high mobility group box protein TOX from Mus musculus (Mouse).